We begin with the raw amino-acid sequence, 1039 residues long: uncharacterized protein (1039 aa).

Residues 1 to 19 (MSLLMAHRKSKSSQRKLRN) are compositionally biased toward basic residues. The disordered stretch occupies residues 1–38 (MSLLMAHRKSKSSQRKLRNRSSSLTPQKRRIRASKGSH).

This is an uncharacterized protein from Sinorhizobium fredii (strain NBRC 101917 / NGR234).